Reading from the N-terminus, the 189-residue chain is Stathmin-4 (189 aa).

Residues Cys20 and Cys22 are each lipidated (S-palmitoyl cysteine). Residues Ser48 to Arg189 enclose the SLD domain. Ser90 carries the post-translational modification Phosphoserine. Residues Ser90 to Ser188 adopt a coiled-coil conformation. The tract at residues Gln168–Arg189 is disordered.

Belongs to the stathmin family.

Its subcellular location is the golgi apparatus. The protein resides in the cell projection. It is found in the growth cone. It localises to the axon. Exhibits microtubule-destabilizing activity. The chain is Stathmin-4 (STMN4) from Homo sapiens (Human).